A 402-amino-acid chain; its full sequence is Phosphoglycerate kinase (402 aa).

Substrate contacts are provided by residues aspartate 24–asparagine 26, arginine 40, histidine 63–arginine 66, arginine 122, and arginine 155. ATP is bound by residues lysine 206, glycine 297, glutamate 328, and glycine 357–serine 360.

This sequence belongs to the phosphoglycerate kinase family. In terms of assembly, monomer.

The protein localises to the cytoplasm. The enzyme catalyses (2R)-3-phosphoglycerate + ATP = (2R)-3-phospho-glyceroyl phosphate + ADP. The protein operates within carbohydrate degradation; glycolysis; pyruvate from D-glyceraldehyde 3-phosphate: step 2/5. In Prochlorococcus marinus (strain SARG / CCMP1375 / SS120), this protein is Phosphoglycerate kinase.